The chain runs to 556 residues: 2-succinyl-5-enolpyruvyl-6-hydroxy-3-cyclohexene-1-carboxylate synthase (556 aa).

It belongs to the TPP enzyme family. MenD subfamily. In terms of assembly, homodimer. Mg(2+) serves as cofactor. Mn(2+) is required as a cofactor. Requires thiamine diphosphate as cofactor.

The catalysed reaction is isochorismate + 2-oxoglutarate + H(+) = 5-enolpyruvoyl-6-hydroxy-2-succinyl-cyclohex-3-ene-1-carboxylate + CO2. It functions in the pathway quinol/quinone metabolism; 1,4-dihydroxy-2-naphthoate biosynthesis; 1,4-dihydroxy-2-naphthoate from chorismate: step 2/7. It participates in quinol/quinone metabolism; menaquinone biosynthesis. Catalyzes the thiamine diphosphate-dependent decarboxylation of 2-oxoglutarate and the subsequent addition of the resulting succinic semialdehyde-thiamine pyrophosphate anion to isochorismate to yield 2-succinyl-5-enolpyruvyl-6-hydroxy-3-cyclohexene-1-carboxylate (SEPHCHC). This Shigella flexneri serotype 5b (strain 8401) protein is 2-succinyl-5-enolpyruvyl-6-hydroxy-3-cyclohexene-1-carboxylate synthase.